The chain runs to 585 residues: uncharacterized protein (585 aa).

Positions 1–18 (MSALSTKLEPTNSYSESL) are enriched in polar residues. Residues 1-23 (MSALSTKLEPTNSYSESLPPQRR) are disordered.

Belongs to the protein kinase superfamily. ADCK protein kinase family.

This is an uncharacterized protein from Synechocystis sp. (strain ATCC 27184 / PCC 6803 / Kazusa).